A 432-amino-acid polypeptide reads, in one-letter code: Adenylosuccinate synthetase (432 aa).

Residues 12–18 (GDEGKGK) and 40–42 (GHT) contribute to the GTP site. The active-site Proton acceptor is the aspartate 13. Mg(2+) contacts are provided by aspartate 13 and glycine 40. Residues 13 to 16 (DEGK), 38 to 41 (NAGH), threonine 132, arginine 146, glutamine 226, threonine 241, and arginine 305 contribute to the IMP site. Residue histidine 41 is the Proton donor of the active site. Residue 301-307 (TVTGRKR) coordinates substrate. Residues arginine 307, 333–335 (KLD), and 415–417 (STS) contribute to the GTP site.

The protein belongs to the adenylosuccinate synthetase family. As to quaternary structure, homodimer. Mg(2+) serves as cofactor.

Its subcellular location is the cytoplasm. It catalyses the reaction IMP + L-aspartate + GTP = N(6)-(1,2-dicarboxyethyl)-AMP + GDP + phosphate + 2 H(+). It participates in purine metabolism; AMP biosynthesis via de novo pathway; AMP from IMP: step 1/2. Its function is as follows. Plays an important role in the de novo pathway of purine nucleotide biosynthesis. Catalyzes the first committed step in the biosynthesis of AMP from IMP. This is Adenylosuccinate synthetase from Rhizobium etli (strain ATCC 51251 / DSM 11541 / JCM 21823 / NBRC 15573 / CFN 42).